The chain runs to 445 residues: Histamine H3 receptor (445 aa).

Residues 1-40 (MERAPPDGLMNASGALAGEAAAAAGGARTFSAAWTAVLAA) are Extracellular-facing. N11 carries an N-linked (GlcNAc...) asparagine glycan. A helical membrane pass occupies residues 41–61 (LMALLIVATVLGNALVMLAFV). Residues 62-71 (ADSSLRTQNN) lie on the Cytoplasmic side of the membrane. The chain crosses the membrane as a helical span at residues 72 to 92 (FFLLNLAISDFLVGVFCIPLY). Topologically, residues 93–109 (VPYVLTGRWTFGRGLCK) are extracellular. C108 and C189 are oxidised to a cystine. Residues 110–130 (LWLVVDYLLCTSSVFNIVLIS) traverse the membrane as a helical segment. Residues 131 to 157 (YDRFLSVTRAVSYRAQQGDTRRAVRKM) lie on the Cytoplasmic side of the membrane. A helical membrane pass occupies residues 158 to 178 (VLVWVLAFLLYGPAILSWEYL). Residues 179 to 197 (SGGSSIPEGHCYAEFFYNW) lie on the Extracellular side of the membrane. Residues 198–218 (YFLITASTLEFFTPFLSVTFF) form a helical membrane-spanning segment. The Cytoplasmic segment spans residues 219–359 (NLSIYLNIQR…LSRDKKVAKS (141 aa)). Disordered stretches follow at residues 236-264 (GGAR…WGCW) and 288-336 (AGEA…LEKR). The span at 299-312 (AAASPTSSSGSSSR) shows a compositional bias: low complexity. Residues 360-380 (LAIIVSIFGLCWAPYTLLMII) form a helical membrane-spanning segment. Residues 381–398 (RAACHGHCVPDYWYETSF) are Extracellular-facing. A helical transmembrane segment spans residues 399-419 (WLLWANSAVNPVLYPLCHYSF). At 420 to 445 (RRAFTKLLCPQKLKVQPHSSLEHCWK) the chain is on the cytoplasmic side. S439 carries the phosphoserine modification.

It belongs to the G-protein coupled receptor 1 family. Expressed widely and abundantly throughout the brain. Highly expressed in discrete neuronal populations such as pyramidal cells in cerebral cortex or cerebellar Purkinje cells.

The protein localises to the cell membrane. In terms of biological role, the H3 subclass of histamine receptors could mediate the histamine signals in CNS and peripheral nervous system. Signals through the inhibition of adenylate cyclase and displays high constitutive activity (spontaneous activity in the absence of agonist). The protein is Histamine H3 receptor (HRH3) of Cavia porcellus (Guinea pig).